A 193-amino-acid chain; its full sequence is PBAN-type neuropeptides (193 aa).

An N-terminal signal peptide occupies residues 1–19 (MYGAVLPGLFFIFISCVVA). Ile-46 is subject to Isoleucine amide. 2 positions are modified to leucine amide: Leu-102 and Leu-122. Residues 124 to 158 (RRLADDTPATPADQEMYRPDPEQIDSRTKYFSPRL) are disordered. Over residues 138-151 (EMYRPDPEQIDSRT) the composition is skewed to basic and acidic residues. Leucine amide occurs at positions 158 and 168. The propeptide occupies 186–193 (STNKTQST).

This sequence belongs to the pyrokinin family. As to expression, expressed in the mandibular, maxillary and labial neuromeres of the male and female brain-subesophageal ganglions, in the corpora cardiaca and all around the corpora allata, and at a lower level in the brain near the calyx and pedunculus of the mushroom body (at protein level). Expressed in larvae and adult of both sexes (at protein level). Expressed in corpora cardiaca (CC), corpora allata (CA) and gnathal ganglion (GNG) (at protein level). Expression in CC and CA detected in most animals, in GNG in some (at protein level). In terms of tissue distribution, expression not detected in CC, CA, AL or GNG (at protein level). As to expression, expressed in corpora cardiaca (CC), corpora allata (CA), antennal lobe (AL) and gnathal ganglion (GNG) (at protein level). Expression in CC, CA and GNG detected in most animals, expression in AL detected in few (at protein level). Expressed in corpora cardiaca (CC), corpora allata (CA), antennal lobe (AL) and gnathal ganglion (GNG) (at protein level). Expression in CC, CA and GNG detected in all animals, expression in AL detected in some (at protein level). In terms of tissue distribution, expressed in corpora cardiaca (CC), corpora allata (CA), antennal lobe (AL) and gnathal ganglion (GNG) (at protein level). Expression in CC, CA and GNG detected in most animals, expression in AL detected in some animals (at protein level).

It localises to the secreted. Its function is as follows. A hormone that controls sex pheromone production in female moths and pheromone responsiveness in male. This Agrotis ipsilon (Black cutworm moth) protein is PBAN-type neuropeptides.